A 350-amino-acid polypeptide reads, in one-letter code: Biotin synthase (350 aa).

The Radical SAM core domain maps to 41 to 268; the sequence is NEVQISRLLS…KSRVRLSAGR (228 aa). [4Fe-4S] cluster-binding residues include Cys56, Cys60, and Cys63. [2Fe-2S] cluster is bound by residues Cys100, Cys131, Cys191, and Arg263.

It belongs to the radical SAM superfamily. Biotin synthase family. In terms of assembly, homodimer. It depends on [4Fe-4S] cluster as a cofactor. [2Fe-2S] cluster is required as a cofactor.

The enzyme catalyses (4R,5S)-dethiobiotin + (sulfur carrier)-SH + 2 reduced [2Fe-2S]-[ferredoxin] + 2 S-adenosyl-L-methionine = (sulfur carrier)-H + biotin + 2 5'-deoxyadenosine + 2 L-methionine + 2 oxidized [2Fe-2S]-[ferredoxin]. It participates in cofactor biosynthesis; biotin biosynthesis; biotin from 7,8-diaminononanoate: step 2/2. Its function is as follows. Catalyzes the conversion of dethiobiotin (DTB) to biotin by the insertion of a sulfur atom into dethiobiotin via a radical-based mechanism. The protein is Biotin synthase of Shewanella piezotolerans (strain WP3 / JCM 13877).